The primary structure comprises 154 residues: Ascorbate-specific PTS system EIIA component (154 aa).

Residues 6 to 150 (SLAENKSIRL…QEVLDLIDRT (145 aa)) form the PTS EIIA type-2 domain. H68 (tele-phosphohistidine intermediate) is an active-site residue. A Phosphohistidine modification is found at H68.

It localises to the cytoplasm. Its function is as follows. The phosphoenolpyruvate-dependent sugar phosphotransferase system (sugar PTS), a major carbohydrate active transport system, catalyzes the phosphorylation of incoming sugar substrates concomitantly with their translocation across the cell membrane. The enzyme II UlaABC PTS system is involved in ascorbate transport. The protein is Ascorbate-specific PTS system EIIA component (ulaC) of Escherichia coli O157:H7.